Here is a 603-residue protein sequence, read N- to C-terminus: UvrABC system protein C (603 aa).

The GIY-YIG domain occupies 15–92 (DQPGCYLMKD…IKKHDPRFNI (78 aa)). In terms of domain architecture, UVR spans 197–232 (KTVKNDLMKKMQEAAENMEFEKAGEFRDQINAIETT).

Belongs to the UvrC family. Interacts with UvrB in an incision complex.

The protein resides in the cytoplasm. The UvrABC repair system catalyzes the recognition and processing of DNA lesions. UvrC both incises the 5' and 3' sides of the lesion. The N-terminal half is responsible for the 3' incision and the C-terminal half is responsible for the 5' incision. The chain is UvrABC system protein C from Listeria monocytogenes serotype 4a (strain HCC23).